The primary structure comprises 337 residues: Glyceraldehyde-3-phosphate dehydrogenase 1 (337 aa).

Residues Arg11–Ile12, Asp33, and Arg78 each bind NAD(+). D-glyceraldehyde 3-phosphate-binding positions include Ser149 to Thr151, Thr180, Thr209 to Gly210, and Arg232. Cys150 (nucleophile) is an active-site residue. Asn318 is a binding site for NAD(+).

Belongs to the glyceraldehyde-3-phosphate dehydrogenase family. Homotetramer.

It is found in the cytoplasm. The catalysed reaction is D-glyceraldehyde 3-phosphate + phosphate + NAD(+) = (2R)-3-phospho-glyceroyl phosphate + NADH + H(+). It functions in the pathway carbohydrate degradation; glycolysis; pyruvate from D-glyceraldehyde 3-phosphate: step 1/5. The sequence is that of Glyceraldehyde-3-phosphate dehydrogenase 1 (gpd1) from Agaricus bisporus (White button mushroom).